The sequence spans 451 residues: tRNA modification GTPase MnmE (451 aa).

3 residues coordinate (6S)-5-formyl-5,6,7,8-tetrahydrofolate: Arg28, Glu85, and Lys124. The 154-residue stretch at 220–373 (GLYTVLVGPP…LKTRLRTLLL (154 aa)) folds into the TrmE-type G domain. K(+) is bound at residue Asn230. GTP is bound by residues 230–235 (NVGKSS), 249–255 (TDVPGTT), and 274–277 (DTAG). Ser234 provides a ligand contact to Mg(2+). K(+) is bound by residues Thr249, Val251, and Thr254. Thr255 serves as a coordination point for Mg(2+). Lys451 is a binding site for (6S)-5-formyl-5,6,7,8-tetrahydrofolate.

Belongs to the TRAFAC class TrmE-Era-EngA-EngB-Septin-like GTPase superfamily. TrmE GTPase family. Homodimer. Heterotetramer of two MnmE and two MnmG subunits. It depends on K(+) as a cofactor.

It localises to the cytoplasm. Its function is as follows. Exhibits a very high intrinsic GTPase hydrolysis rate. Involved in the addition of a carboxymethylaminomethyl (cmnm) group at the wobble position (U34) of certain tRNAs, forming tRNA-cmnm(5)s(2)U34. The chain is tRNA modification GTPase MnmE from Xylella fastidiosa (strain Temecula1 / ATCC 700964).